Here is a 511-residue protein sequence, read N- to C-terminus: IWS1-like protein (511 aa).

Positions 1 to 200 are disordered; it reads MSDHEEESHG…DDGPVDRHGR (200 aa). Composition is skewed to low complexity over residues 11-30 and 55-86; these read ASPT…PISP and APAS…SPVK. Residues 94 to 103 are compositionally biased toward acidic residues; it reads DSDEDSDAEE. A compositionally biased stretch (basic and acidic residues) spans 134–143; that stretch reads HEGTSKKEPT. The segment covering 166–179 has biased composition (acidic residues); sequence LDEFVEGRDEEESQ. Residues 294-374 form the TFIIS N-terminal domain; the sequence is SALSEWLAPL…GEWARPIYHL (81 aa). Residues 382–454 are disordered; it reads SRQEREERDY…RARVPKPSTK (73 aa). 2 stretches are compositionally biased toward basic and acidic residues: residues 383 to 395 and 414 to 425; these read RQER…SRMP and DQPKRPRIRDAD.

This sequence belongs to the IWS1 family.

The protein resides in the nucleus. The polypeptide is IWS1-like protein (Caenorhabditis elegans).